A 423-amino-acid polypeptide reads, in one-letter code: Type II methyltransferase M.NgoBV (423 aa).

The region spanning I4–L423 is the SAM-dependent MTase C5-type domain. C80 is an active-site residue.

The protein belongs to the class I-like SAM-binding methyltransferase superfamily. C5-methyltransferase family.

It carries out the reaction a 2'-deoxycytidine in DNA + S-adenosyl-L-methionine = a 5-methyl-2'-deoxycytidine in DNA + S-adenosyl-L-homocysteine + H(+). Its function is as follows. A methylase, recognizes the double-stranded sequence 5'-GGNNCC-3', methylates C-5 on both strands, and protects the DNA from cleavage by the NgoBV endonuclease. This chain is Type II methyltransferase M.NgoBV (ngoBVM), found in Neisseria gonorrhoeae.